A 188-amino-acid chain; its full sequence is Large ribosomal subunit protein uL5 (188 aa).

It belongs to the universal ribosomal protein uL5 family. Part of the 50S ribosomal subunit; part of the 5S rRNA/L5/L18/L25 subcomplex. Contacts the 5S rRNA and the P site tRNA. Forms a bridge to the 30S subunit in the 70S ribosome.

Functionally, this is one of the proteins that bind and probably mediate the attachment of the 5S RNA into the large ribosomal subunit, where it forms part of the central protuberance. In the 70S ribosome it contacts protein S13 of the 30S subunit (bridge B1b), connecting the 2 subunits; this bridge is implicated in subunit movement. Contacts the P site tRNA; the 5S rRNA and some of its associated proteins might help stabilize positioning of ribosome-bound tRNAs. The polypeptide is Large ribosomal subunit protein uL5 (Aquifex pyrophilus).